Consider the following 167-residue polypeptide: 2-C-methyl-D-erythritol 2,4-cyclodiphosphate synthase (167 aa).

The a divalent metal cation site is built by Asp-11 and His-13. 4-CDP-2-C-methyl-D-erythritol 2-phosphate contacts are provided by residues 11–13 (DIH) and 37–38 (HS). His-45 lines the a divalent metal cation pocket. 4-CDP-2-C-methyl-D-erythritol 2-phosphate is bound by residues 59 to 61 (DIG), 64 to 68 (FSDTD), 103 to 109 (AQAPKMA), and Arg-145.

The protein belongs to the IspF family. As to quaternary structure, homotrimer. A divalent metal cation is required as a cofactor.

It catalyses the reaction 4-CDP-2-C-methyl-D-erythritol 2-phosphate = 2-C-methyl-D-erythritol 2,4-cyclic diphosphate + CMP. It participates in isoprenoid biosynthesis; isopentenyl diphosphate biosynthesis via DXP pathway; isopentenyl diphosphate from 1-deoxy-D-xylulose 5-phosphate: step 4/6. Involved in the biosynthesis of isopentenyl diphosphate (IPP) and dimethylallyl diphosphate (DMAPP), two major building blocks of isoprenoid compounds. Catalyzes the conversion of 4-diphosphocytidyl-2-C-methyl-D-erythritol 2-phosphate (CDP-ME2P) to 2-C-methyl-D-erythritol 2,4-cyclodiphosphate (ME-CPP) with a corresponding release of cytidine 5-monophosphate (CMP). The protein is 2-C-methyl-D-erythritol 2,4-cyclodiphosphate synthase of Nitrosomonas eutropha (strain DSM 101675 / C91 / Nm57).